Here is a 443-residue protein sequence, read N- to C-terminus: Xaa-Pro dipeptidase (443 aa).

Asp-246, Asp-257, His-339, Glu-384, and Glu-423 together coordinate Mn(2+).

Belongs to the peptidase M24B family. Bacterial-type prolidase subfamily. It depends on Mn(2+) as a cofactor.

The catalysed reaction is Xaa-L-Pro dipeptide + H2O = an L-alpha-amino acid + L-proline. Its function is as follows. Splits dipeptides with a prolyl residue in the C-terminal position. The sequence is that of Xaa-Pro dipeptidase from Pectobacterium carotovorum subsp. carotovorum (strain PC1).